We begin with the raw amino-acid sequence, 233 residues long: Riboflavin kinase (233 aa).

The tract at residues 1 to 99 (MSGATSTGDV…YRRIFEDPGE (99 aa)) is unknown. Residues 100-233 (LALAGTVTSG…DDEVTIRVEA (134 aa)) form a riboflavin kinase region. CDP is bound at residue 109-114 (GMGEGR). Mg(2+)-binding residues include threonine 138 and asparagine 140. FMN-binding residues include threonine 200 and glutamate 208. 213 to 216 (VKLR) contributes to the CDP binding site.

It belongs to the archaeal riboflavin kinase family. Mg(2+) is required as a cofactor.

It catalyses the reaction riboflavin + CTP = CDP + FMN + H(+). The protein operates within cofactor biosynthesis; FMN biosynthesis; FMN from riboflavin (CTP route): step 1/1. Functionally, catalyzes the CTP-dependent phosphorylation of riboflavin (vitamin B2) to form flavin mononucleotide (FMN). The protein is Riboflavin kinase (ribK) of Halobacterium salinarum (strain ATCC 700922 / JCM 11081 / NRC-1) (Halobacterium halobium).